A 375-amino-acid chain; its full sequence is tRNA-specific 2-thiouridylase MnmA (375 aa).

ATP is bound by residues 9–16 (AMSGGVDS) and leucine 35. Cysteine 105 (nucleophile) is an active-site residue. A disulfide bond links cysteine 105 and cysteine 201. Residue glycine 129 participates in ATP binding. Residues 151–153 (KNQ) are interaction with tRNA. The Cysteine persulfide intermediate role is filled by cysteine 201. The segment at 307 to 308 (RY) is interaction with tRNA.

It belongs to the MnmA/TRMU family.

It is found in the cytoplasm. It catalyses the reaction S-sulfanyl-L-cysteinyl-[protein] + uridine(34) in tRNA + AH2 + ATP = 2-thiouridine(34) in tRNA + L-cysteinyl-[protein] + A + AMP + diphosphate + H(+). Functionally, catalyzes the 2-thiolation of uridine at the wobble position (U34) of tRNA, leading to the formation of s(2)U34. The sequence is that of tRNA-specific 2-thiouridylase MnmA from Leptospira interrogans serogroup Icterohaemorrhagiae serovar copenhageni (strain Fiocruz L1-130).